We begin with the raw amino-acid sequence, 117 residues long: G antigen 4 (117 aa).

Residues 1 to 117 are disordered; it reads MSWRGRSTYY…PEEGEKQSQC (117 aa). Acidic residues-rich tracts occupy residues 32 to 45 and 87 to 96; these read FSDE…EEGE and ECEDGPDGQE. Basic and acidic residues predominate over residues 103–117; sequence EEVKTPEEGEKQSQC.

It belongs to the GAGE family. As to expression, expressed in a variety of tumor tissues but not in normal tissues, except testis.

In terms of biological role, antigen, recognized on melanoma by autologous cytolytic T-lymphocytes. This is G antigen 4 from Homo sapiens (Human).